Reading from the N-terminus, the 593-residue chain is MHVTVQLSLLLSLASSLPLVSAIPQHDGQAYTFPSTGRSATADTDPVLEVRQGAYRPPSAWTRLRDSIVESVWGVPQRGKDSETKTGKQSEAASKAPATLQARYGEDVVLRFTIKTQEEMKALVEASNILFLDVWGTHDDGIPSLLGLLPPSLQTSHVPLIRDLAQAIYESYPKNNPSSPSHPGATTRRFSPSASTPESQPHETKNIFFQDYQPLSVLLPWMRLLVSMFSSHTTLISVGTTAEGRDIPALRVGVHPTNNAQQAPRRRTIVISGGAHAREWISVSTVSYIAYSFITGYGKSRSITKLLEQFDYVFIPTVNPDGYVYTFSTDRLWRKNRQSTSLSFCPGIDLDRSWGFEWDGNATRSNPCSESYAGEGPFEAIEAREIADWARKEVTENNVHFAGFVDLHSYSQQILYPYGHSCAHLPANLENLEELGAGLAKAIRRSSREIYDTKAACRGIVASGAREKGTNEPVASYALESTAGSALDWFYHDLDVRFSYQIKLRDRGSYGFLLPREHIVPTGKEIYHAVVAMGKFLVSPHILEEEVDEPHAGEQTQDNSYDEDGDNLFRAQGGDPQVRFTRRNIGAHDDDSE.

The signal sequence occupies residues 1-22; sequence MHVTVQLSLLLSLASSLPLVSA. Positions 23–175 are excised as a propeptide; it reads IPQHDGQAYT…QAIYESYPKN (153 aa). Disordered stretches follow at residues 75 to 98 and 172 to 202; these read VPQR…KAPA and YPKN…SQPH. A compositionally biased stretch (basic and acidic residues) spans 78–88; sequence RGKDSETKTGK. Polar residues predominate over residues 188-199; it reads RRFSPSASTPES. The Peptidase M14 domain occupies 211–537; that stretch reads DYQPLSVLLP…HAVVAMGKFL (327 aa). Positions 276 and 279 each coordinate Zn(2+). Residues 276–279, Arg334, and 351–352 contribute to the substrate site; these read HARE and DR. A disulfide bridge connects residues Cys345 and Cys368. Asn361 carries N-linked (GlcNAc...) asparagine glycosylation. Residue His408 coordinates Zn(2+). Substrate is bound at residue 409-410; sequence SY. A disordered region spans residues 548-593; it reads DEPHAGEQTQDNSYDEDGDNLFRAQGGDPQVRFTRRNIGAHDDDSE.

This sequence belongs to the peptidase M14 family. Zn(2+) is required as a cofactor.

The protein resides in the vacuole. It localises to the secreted. Its function is as follows. Inactive carboxypeptidase that may play a role in cell wall organization and biogenesis. The sequence is that of Inactive metallocarboxypeptidase ECM14 (ECM14) from Arthroderma otae (strain ATCC MYA-4605 / CBS 113480) (Microsporum canis).